Reading from the N-terminus, the 422-residue chain is Gamma-glutamyl phosphate reductase (422 aa).

This sequence belongs to the gamma-glutamyl phosphate reductase family.

The protein resides in the cytoplasm. The enzyme catalyses L-glutamate 5-semialdehyde + phosphate + NADP(+) = L-glutamyl 5-phosphate + NADPH + H(+). It functions in the pathway amino-acid biosynthesis; L-proline biosynthesis; L-glutamate 5-semialdehyde from L-glutamate: step 2/2. Catalyzes the NADPH-dependent reduction of L-glutamate 5-phosphate into L-glutamate 5-semialdehyde and phosphate. The product spontaneously undergoes cyclization to form 1-pyrroline-5-carboxylate. In Shewanella piezotolerans (strain WP3 / JCM 13877), this protein is Gamma-glutamyl phosphate reductase.